Consider the following 173-residue polypeptide: Nicotinamide-nucleotide adenylyltransferase (173 aa).

It belongs to the archaeal NMN adenylyltransferase family.

It is found in the cytoplasm. The enzyme catalyses beta-nicotinamide D-ribonucleotide + ATP + H(+) = diphosphate + NAD(+). Its pathway is cofactor biosynthesis; NAD(+) biosynthesis; NAD(+) from nicotinamide D-ribonucleotide: step 1/1. The sequence is that of Nicotinamide-nucleotide adenylyltransferase from Methanosarcina mazei (strain ATCC BAA-159 / DSM 3647 / Goe1 / Go1 / JCM 11833 / OCM 88) (Methanosarcina frisia).